The chain runs to 740 residues: Ion-translocating oxidoreductase complex subunit C (740 aa).

4Fe-4S ferredoxin-type domains lie at 369-397 (GEPQ…QQLY) and 407-436 (KATT…VQYF). [4Fe-4S] cluster is bound by residues Cys377, Cys380, Cys383, Cys387, Cys416, Cys419, Cys422, and Cys426. Residues 602–716 (KLEQQQANAE…EPEEQVDPRK (115 aa)) form a disordered region.

The protein belongs to the 4Fe4S bacterial-type ferredoxin family. RnfC subfamily. As to quaternary structure, the complex is composed of six subunits: RsxA, RsxB, RsxC, RsxD, RsxE and RsxG. Requires [4Fe-4S] cluster as cofactor.

The protein resides in the cell inner membrane. Its function is as follows. Part of a membrane-bound complex that couples electron transfer with translocation of ions across the membrane. Required to maintain the reduced state of SoxR. This chain is Ion-translocating oxidoreductase complex subunit C, found in Escherichia coli (strain SE11).